The sequence spans 98 residues: NADH-ubiquinone oxidoreductase chain 4L (98 aa).

3 helical membrane-spanning segments follow: residues 1–21 (MSITTLNIMVAFMMALLGMFV), 29–49 (SLLCLEGMMLSLFMLATIVSL), and 61–81 (VILLVFAACEAAVGLALLIMV).

Belongs to the complex I subunit 4L family. As to quaternary structure, core subunit of respiratory chain NADH dehydrogenase (Complex I) which is composed of 45 different subunits.

Its subcellular location is the mitochondrion inner membrane. The catalysed reaction is a ubiquinone + NADH + 5 H(+)(in) = a ubiquinol + NAD(+) + 4 H(+)(out). Functionally, core subunit of the mitochondrial membrane respiratory chain NADH dehydrogenase (Complex I) which catalyzes electron transfer from NADH through the respiratory chain, using ubiquinone as an electron acceptor. Part of the enzyme membrane arm which is embedded in the lipid bilayer and involved in proton translocation. The polypeptide is NADH-ubiquinone oxidoreductase chain 4L (MT-ND4L) (Ochotona princeps (Southern American pika)).